We begin with the raw amino-acid sequence, 251 residues long: uncharacterized protein (251 aa).

Positions 1–25 (MSAGRLNKKSLGIVMLLSVGLLLAG) are cleaved as a signal peptide. C26 carries the N-palmitoyl cysteine lipid modification. C26 carries the S-diacylglycerol cysteine lipid modification. Positions 40–84 (SVYTVKRGDTLYRISRTTGTSVKELARLNGISPPYTIEVGQKLKL) constitute a LysM domain. Residues 93-112 (TRKSTAKSTTKTASVTPSSA) show a composition bias toward low complexity. Residues 93–115 (TRKSTAKSTTKTASVTPSSAVPK) form a disordered region.

The protein belongs to the peptidase M23B family.

The protein localises to the cell inner membrane. This is an uncharacterized protein from Escherichia coli (strain K12).